The chain runs to 512 residues: Glucose-1-phosphate adenylyltransferase small subunit 2, chloroplastic (512 aa).

The disordered stretch occupies residues 1–21 (MAAIGVLKVPPSSSSSSSSSS). The transit peptide at 1 to 63 (MAAIGVLKVP…RNPFIVSPKA (63 aa)) directs the protein to the chloroplast. Residues 12-21 (SSSSSSSSSS) are compositionally biased toward low complexity.

This sequence belongs to the bacterial/plant glucose-1-phosphate adenylyltransferase family. As to quaternary structure, heterotetramer. Leaves and seeds.

Its subcellular location is the plastid. The protein localises to the chloroplast. It carries out the reaction alpha-D-glucose 1-phosphate + ATP + H(+) = ADP-alpha-D-glucose + diphosphate. It participates in glycan biosynthesis; starch biosynthesis. Its activity is regulated as follows. Activated by 3'phosphoglycerate, inhibited by orthophosphate. Allosteric regulation. This protein plays a role in synthesis of starch. It catalyzes the synthesis of the activated glycosyl donor, ADP-glucose from Glc-1-P and ATP. The protein is Glucose-1-phosphate adenylyltransferase small subunit 2, chloroplastic (AGPP) of Vicia faba (Broad bean).